A 657-amino-acid polypeptide reads, in one-letter code: Protein kinase and PP2C-like domain-containing protein (657 aa).

In terms of domain architecture, Protein kinase spans 32–327 (FSLLSPIAKG…LKIIEKHIAV (296 aa)). Residues 38–46 (IAKGSESTV) and Lys59 contribute to the ATP site. The active-site Proton acceptor; for kinase activity is the Asp156. The 258-residue stretch at 390 to 647 (SWGSFATCGR…DNITVIVVFL (258 aa)) folds into the PPM-type phosphatase domain. Asp426, Gly427, Asp598, and Asp638 together coordinate Mn(2+).

It in the N-terminal section; belongs to the protein kinase superfamily. Ser/Thr protein kinase family. The protein in the C-terminal section; belongs to the PP2C family. It depends on Mg(2+) as a cofactor. Requires Mn(2+) as cofactor.

The catalysed reaction is L-seryl-[protein] + ATP = O-phospho-L-seryl-[protein] + ADP + H(+). It carries out the reaction L-threonyl-[protein] + ATP = O-phospho-L-threonyl-[protein] + ADP + H(+). It catalyses the reaction O-phospho-L-seryl-[protein] + H2O = L-seryl-[protein] + phosphate. The enzyme catalyses O-phospho-L-threonyl-[protein] + H2O = L-threonyl-[protein] + phosphate. The protein is Protein kinase and PP2C-like domain-containing protein of Oryza sativa subsp. japonica (Rice).